A 78-amino-acid chain; its full sequence is UPF0349 protein BPUM_2879 (78 aa).

This sequence belongs to the UPF0349 family.

The sequence is that of UPF0349 protein BPUM_2879 from Bacillus pumilus (strain SAFR-032).